A 214-amino-acid polypeptide reads, in one-letter code: Large ribosomal subunit protein uL16 (214 aa).

The protein belongs to the universal ribosomal protein uL16 family. Component of the large ribosomal subunit. Mature ribosomes consist of a small (40S) and a large (60S) subunit. The 40S subunit contains about 33 different proteins and 1 molecule of RNA (18S). The 60S subunit contains about 49 different proteins and 3 molecules of RNA (28S, 5.8S and 5S).

In Caenorhabditis elegans, this protein is Large ribosomal subunit protein uL16 (rpl-10L).